A 211-amino-acid polypeptide reads, in one-letter code: Histidine biosynthesis bifunctional protein HisIE (211 aa).

Residues 1 to 107 (MNKLIDFSKG…FNSEIESRFK (107 aa)) are phosphoribosyl-AMP cyclohydrolase. A phosphoribosyl-ATP pyrophosphohydrolase region spans residues 108 to 211 (IQALAQTIHQ…KGERKKVQEW (104 aa)).

This sequence in the N-terminal section; belongs to the PRA-CH family. The protein in the C-terminal section; belongs to the PRA-PH family.

The protein resides in the cytoplasm. It catalyses the reaction 1-(5-phospho-beta-D-ribosyl)-ATP + H2O = 1-(5-phospho-beta-D-ribosyl)-5'-AMP + diphosphate + H(+). The catalysed reaction is 1-(5-phospho-beta-D-ribosyl)-5'-AMP + H2O = 1-(5-phospho-beta-D-ribosyl)-5-[(5-phospho-beta-D-ribosylamino)methylideneamino]imidazole-4-carboxamide. It functions in the pathway amino-acid biosynthesis; L-histidine biosynthesis; L-histidine from 5-phospho-alpha-D-ribose 1-diphosphate: step 2/9. Its pathway is amino-acid biosynthesis; L-histidine biosynthesis; L-histidine from 5-phospho-alpha-D-ribose 1-diphosphate: step 3/9. The protein is Histidine biosynthesis bifunctional protein HisIE of Staphylococcus epidermidis (strain ATCC 12228 / FDA PCI 1200).